Consider the following 420-residue polypeptide: ATP phosphoribosyltransferase regulatory subunit (420 aa).

This sequence belongs to the class-II aminoacyl-tRNA synthetase family. HisZ subfamily. In terms of assembly, heteromultimer composed of HisG and HisZ subunits.

The protein localises to the cytoplasm. It participates in amino-acid biosynthesis; L-histidine biosynthesis; L-histidine from 5-phospho-alpha-D-ribose 1-diphosphate: step 1/9. Required for the first step of histidine biosynthesis. May allow the feedback regulation of ATP phosphoribosyltransferase activity by histidine. The polypeptide is ATP phosphoribosyltransferase regulatory subunit (Bacillus mycoides (strain KBAB4) (Bacillus weihenstephanensis)).